The following is a 100-amino-acid chain: Apolipoprotein C-II (100 aa).

The N-terminal stretch at 1 to 22 is a signal peptide; sequence MGTRFLLALFLVLLVLGFEVQG. A lipid binding region spans residues 66–74; that stretch reads TVDEKLRDM. Residues 78–100 are lipoprotein lipase cofactor; the sequence is STAAVSTYAGIFTDQLLTLLKGD.

The protein belongs to the apolipoprotein C2 family. Proapolipoprotein C-II is synthesized as a sialic acid containing glycoprotein which is subsequently desialylated prior to its proteolytic processing. Post-translationally, proapolipoprotein C-II, the major form found in plasma undergoes proteolytic cleavage of its N-terminal hexapeptide to generate apolipoprotein C-II, which occurs as the minor form in plasma.

Its subcellular location is the secreted. Its function is as follows. Component of chylomicrons, very low-density lipoproteins (VLDL), low-density lipoproteins (LDL), and high-density lipoproteins (HDL) in plasma. Plays an important role in lipoprotein metabolism as an activator of lipoprotein lipase. Both proapolipoprotein C-II and apolipoprotein C-II can activate lipoprotein lipase. The protein is Apolipoprotein C-II (APOC2) of Otolemur garnettii (Small-eared galago).